A 420-amino-acid chain; its full sequence is Pectate lyase (420 aa).

Positions 1–21 (MKKVMLATALFLGLTPAGANA) are cleaved as a signal peptide. The disordered stretch occupies residues 117–139 (TWGKKEPSGTQEEARARSQKNQK). Positions 119–132 (GKKEPSGTQEEARA) are enriched in basic and acidic residues. Positions 205, 244, and 248 each coordinate Ca(2+). Arg300 is a catalytic residue.

It belongs to the polysaccharide lyase 1 family. Monomer. Ca(2+) is required as a cofactor.

Its subcellular location is the secreted. The catalysed reaction is Eliminative cleavage of (1-&gt;4)-alpha-D-galacturonan to give oligosaccharides with 4-deoxy-alpha-D-galact-4-enuronosyl groups at their non-reducing ends.. It participates in glycan metabolism; pectin degradation; 2-dehydro-3-deoxy-D-gluconate from pectin: step 2/5. Produces unsaturated products from polygalacturonate. The polypeptide is Pectate lyase (pel) (Bacillus subtilis (strain 168)).